The primary structure comprises 158 residues: NADH-quinone oxidoreductase subunit B (158 aa).

C36, C37, C101, and C131 together coordinate [4Fe-4S] cluster.

This sequence belongs to the complex I 20 kDa subunit family. In terms of assembly, NDH-1 is composed of 14 different subunits. Subunits NuoB, C, D, E, F, and G constitute the peripheral sector of the complex. Requires [4Fe-4S] cluster as cofactor.

Its subcellular location is the cell inner membrane. The enzyme catalyses a quinone + NADH + 5 H(+)(in) = a quinol + NAD(+) + 4 H(+)(out). In terms of biological role, NDH-1 shuttles electrons from NADH, via FMN and iron-sulfur (Fe-S) centers, to quinones in the respiratory chain. The immediate electron acceptor for the enzyme in this species is believed to be ubiquinone. Couples the redox reaction to proton translocation (for every two electrons transferred, four hydrogen ions are translocated across the cytoplasmic membrane), and thus conserves the redox energy in a proton gradient. This chain is NADH-quinone oxidoreductase subunit B, found in Francisella philomiragia subsp. philomiragia (strain ATCC 25017 / CCUG 19701 / FSC 153 / O#319-036).